Consider the following 37-residue polypeptide: Large ribosomal subunit protein bL36 (37 aa).

The protein belongs to the bacterial ribosomal protein bL36 family.

In Sulfurovum sp. (strain NBC37-1), this protein is Large ribosomal subunit protein bL36.